A 1187-amino-acid chain; its full sequence is ATP-dependent DNA helicase MPH1 (1187 aa).

Positions I144 to K311 constitute a Helicase ATP-binding domain. L157–T164 provides a ligand contact to ATP. The DEAH box motif lies at D259–H262. A Helicase C-terminal domain is found at E486–M681. Disordered regions lie at residues V542–M576, D781–V848, and P941–K1003. The span at K547–K556 shows a compositional bias: basic residues. Polar residues predominate over residues T564–M576. The span at D781–T817 shows a compositional bias: basic and acidic residues. Positions T822–V848 are enriched in polar residues. Residues S967 to T977 are compositionally biased toward low complexity. Over residues S980–V989 the composition is skewed to basic and acidic residues.

It belongs to the DEAD box helicase family. DEAH subfamily. FANCM sub-subfamily. As to quaternary structure, interacts with the MHF histone-fold complex to form the FANCM-MHF complex.

Its subcellular location is the nucleus. It catalyses the reaction ATP + H2O = ADP + phosphate + H(+). Its function is as follows. ATP-dependent DNA helicase involved in DNA damage repair by homologous recombination and in genome maintenance. Capable of unwinding D-loops. Plays a role in limiting crossover recombinants during mitotic DNA double-strand break (DSB) repair. Component of a FANCM-MHF complex which promotes gene conversion at blocked replication forks, probably by reversal of the stalled fork. The sequence is that of ATP-dependent DNA helicase MPH1 from Candida albicans (strain SC5314 / ATCC MYA-2876) (Yeast).